The sequence spans 402 residues: Phosphoglycerate kinase (402 aa).

Substrate contacts are provided by residues 24–26 (DFN), R40, 63–66 (HFGR), R122, and R155. ATP is bound by residues K206, G297, E328, and 358 to 361 (GGDS).

Belongs to the phosphoglycerate kinase family. As to quaternary structure, monomer.

The protein localises to the cytoplasm. It catalyses the reaction (2R)-3-phosphoglycerate + ATP = (2R)-3-phospho-glyceroyl phosphate + ADP. The protein operates within carbohydrate degradation; glycolysis; pyruvate from D-glyceraldehyde 3-phosphate: step 2/5. This chain is Phosphoglycerate kinase, found in Prochlorococcus marinus (strain AS9601).